The chain runs to 348 residues: Probable malate dehydrogenase 2, mitochondrial (348 aa).

Residues 1–9 constitute a mitochondrion transit peptide; the sequence is MNKILTRSF. 31–37 is a binding site for NAD(+); it reads GASGQIG. Residues Arg112 and Arg118 each contribute to the substrate site. Residues Asn125, Gln132, and 150-152 each bind NAD(+); that span reads VGN. Substrate is bound by residues Asn152 and Arg183. Residue His208 is the Proton acceptor of the active site.

It belongs to the LDH/MDH superfamily. MDH type 2 family. Homodimer.

The protein resides in the mitochondrion. It catalyses the reaction (S)-malate + NAD(+) = oxaloacetate + NADH + H(+). Functionally, catalyzes the reversible oxidation of malate to oxaloacetate. In Dictyostelium discoideum (Social amoeba), this protein is Probable malate dehydrogenase 2, mitochondrial (mdhB).